Reading from the N-terminus, the 221-residue chain is Thiopurine S-methyltransferase (221 aa).

4 residues coordinate S-adenosyl-L-methionine: Trp-12, Leu-47, Glu-68, and Arg-125.

The protein belongs to the class I-like SAM-binding methyltransferase superfamily. TPMT family.

The protein resides in the cytoplasm. It catalyses the reaction S-adenosyl-L-methionine + a thiopurine = S-adenosyl-L-homocysteine + a thiopurine S-methylether.. This chain is Thiopurine S-methyltransferase, found in Legionella pneumophila (strain Corby).